The primary structure comprises 363 residues: Pyrimidine monooxygenase RutA (363 aa).

FMN is bound by residues 49–50 (IK), asparagine 115, glutamate 124, 140–141 (RY), and serine 190.

This sequence belongs to the NtaA/SnaA/DszA monooxygenase family. RutA subfamily.

The catalysed reaction is uracil + FMNH2 + NADH + O2 = (Z)-3-ureidoacrylate + FMN + NAD(+) + H2O + H(+). It carries out the reaction thymine + FMNH2 + NADH + O2 = (Z)-2-methylureidoacrylate + FMN + NAD(+) + H2O + H(+). Functionally, catalyzes the pyrimidine ring opening between N-3 and C-4 by an unusual flavin hydroperoxide-catalyzed mechanism, adding oxygen atoms in the process to yield ureidoacrylate peracid, that immediately reacts with FMN forming ureidoacrylate and FMN-N(5)-oxide. The FMN-N(5)-oxide reacts spontaneously with NADH to produce FMN. Requires the flavin reductase RutF to regenerate FMN in vivo. The sequence is that of Pyrimidine monooxygenase RutA from Escherichia coli O103:H2 (strain 12009 / EHEC).